Consider the following 298-residue polypeptide: Factor-induced gene 1 protein (298 aa).

A run of 4 helical transmembrane segments spans residues 17–37, 163–183, 195–215, and 243–263; these read IFAL…LIGC, VLMA…YVTV, FLLL…MWTH, and VMAW…WLIF. Serine 288 is modified (phosphoserine). Phosphothreonine is present on threonine 293. Serine 296 carries the phosphoserine modification.

Its subcellular location is the membrane. In terms of biological role, required for efficient mating. The chain is Factor-induced gene 1 protein (FIG1) from Saccharomyces cerevisiae (strain ATCC 204508 / S288c) (Baker's yeast).